The primary structure comprises 175 residues: Protein MAL2 (175 aa).

The Cytoplasmic segment spans residues 1-33 (MSAGGAVPPPPNPAVSFPAPRVTLPAGPDILRT). In terms of domain architecture, MARVEL spans 30–174 (ILRTYSGAFV…SLGLALRRWR (145 aa)). Residues 34–54 (YSGAFVCLEIVLGGLVWILVA) form a helical membrane-spanning segment. The Lumenal segment spans residues 55-65 (SSNVPLPLLQG). The helical transmembrane segment at 66–86 (WVMFVSVTAFFFSLLFLGLFL) threads the bilayer. Residues 87–101 (SGMVTQIDANWNFLD) are Cytoplasmic-facing. A helical membrane pass occupies residues 102–122 (FVYHFIVFVFYFGAFLLEAAA). Topologically, residues 123–148 (TSLHDLQCNTTMTVKPLLNDNQYNIN) are lumenal. Asparagine 131 carries an N-linked (GlcNAc...) asparagine glycan. The helical transmembrane segment at 149 to 169 (VAATVFAFMTTACYGCSLGLA) threads the bilayer. At 170–175 (LRRWRP) the chain is on the cytoplasmic side.

The protein belongs to the MAL family. As to quaternary structure, interacts with TPD52L2.

It is found in the cell membrane. The protein localises to the apical cell membrane. Member of the machinery of polarized transport. Required for the indirect transcytotic route at the step of the egress of the transcytosing cargo from perinuclear endosomes in order for it to travel to the apical surface via a raft-dependent pathway. The sequence is that of Protein MAL2 (Mal2) from Mus musculus (Mouse).